The sequence spans 527 residues: Probable protein kinase UbiB (527 aa).

Positions 123–527 (EFNETALASA…AIWLLIYLLS (405 aa)) constitute a Protein kinase domain. Residues 129–137 (LASASIAQV) and lysine 161 each bind ATP. Aspartate 296 acts as the Proton acceptor in catalysis. The helical transmembrane segment at 506 to 526 (FTSFILGLCTGLAIWLLIYLL) threads the bilayer.

This sequence belongs to the ABC1 family. UbiB subfamily.

It localises to the cell inner membrane. It participates in cofactor biosynthesis; ubiquinone biosynthesis [regulation]. Functionally, is probably a protein kinase regulator of UbiI activity which is involved in aerobic coenzyme Q (ubiquinone) biosynthesis. The sequence is that of Probable protein kinase UbiB from Pasteurella multocida (strain Pm70).